The chain runs to 1523 residues: Lysophospholipase nte1 (1523 aa).

Topologically, residues 1 to 66 are cytoplasmic; it reads MADGVTLVDS…LPPVPTTMAG (66 aa). The chain crosses the membrane as a helical span at residues 67 to 87; that stretch reads WIGWVFSFFFQVIPSVLYWVI. Residues 88 to 109 are Lumenal-facing; that stretch reads TFSTITLPTWLFTLFSMSLTFT. Residues 110-130 traverse the membrane as a helical segment; it reads MNFTTLLLIVLAMVSTISWFI. Over 131-1523 the chain is Cytoplasmic; that stretch reads RYRFLNMYSR…RTMAPRRASI (1393 aa). Disordered regions lie at residues 309–384 and 524–545; these read VPNS…KSVH and RAAT…GVSP. Residues 370-382 are compositionally biased toward basic residues; that stretch reads ESRKHSSRKRRKS. A nucleoside 3',5'-cyclic phosphate-binding positions include 681–800 and 841–961; these read GGTS…GAVA and RLTS…IAQR. Residues 1220-1384 enclose the PNPLA domain; that stretch reads LVLGGGGARG…IDNLTVDHMK (165 aa). A GXGXXG motif is present at residues 1224 to 1229; it reads GGGARG. A GXSXG motif is present at residues 1251-1255; the sequence is GTSIG. The active-site Nucleophile is serine 1253. The active-site Proton acceptor is aspartate 1371. Positions 1371 to 1373 match the DGA/G motif; sequence DGG. Residues 1502 to 1523 form a disordered region; it reads LPEETEEKKKLQRTMAPRRASI.

It belongs to the NTE family.

It localises to the endoplasmic reticulum membrane. It catalyses the reaction a 1-acyl-sn-glycero-3-phosphocholine + H2O = sn-glycerol 3-phosphocholine + a fatty acid + H(+). Its activity is regulated as follows. Inhibited by organophosphorus esters. Its function is as follows. Intracellular phospholipase B that catalyzes the double deacylation of phosphatidylcholine (PC) to glycerophosphocholine (GroPCho). Plays an important role in membrane lipid homeostasis. Responsible for the rapid PC turnover in response to inositol, elevated temperatures, or when choline is present in the growth medium. The polypeptide is Lysophospholipase nte1 (nte1) (Neosartorya fischeri (strain ATCC 1020 / DSM 3700 / CBS 544.65 / FGSC A1164 / JCM 1740 / NRRL 181 / WB 181) (Aspergillus fischerianus)).